The primary structure comprises 235 residues: Urease accessory protein UreF (235 aa).

The protein belongs to the UreF family. As to quaternary structure, ureD, UreF and UreG form a complex that acts as a GTP-hydrolysis-dependent molecular chaperone, activating the urease apoprotein by helping to assemble the nickel containing metallocenter of UreC. The UreE protein probably delivers the nickel.

Its subcellular location is the cytoplasm. In terms of biological role, required for maturation of urease via the functional incorporation of the urease nickel metallocenter. This chain is Urease accessory protein UreF, found in Psychrobacter cryohalolentis (strain ATCC BAA-1226 / DSM 17306 / VKM B-2378 / K5).